Reading from the N-terminus, the 92-residue chain is Large ribosomal subunit protein uL23c (92 aa).

It belongs to the universal ribosomal protein uL23 family. Part of the 50S ribosomal subunit.

The protein localises to the plastid. The protein resides in the chloroplast. In terms of biological role, binds to 23S rRNA. In Nephroselmis olivacea (Green alga), this protein is Large ribosomal subunit protein uL23c (rpl23).